Reading from the N-terminus, the 319-residue chain is Forkhead box protein B1 (319 aa).

The segment at residues 13–107 (KPPYSYISLT…ENGSFLRRRK (95 aa)) is a DNA-binding region (fork-head). Residues 278 to 310 (LSNSSPSMSPTSPQTATSQSSPATPSDTLTNPS) are disordered. The span at 279-305 (SNSSPSMSPTSPQTATSQSSPATPSDT) shows a compositional bias: low complexity.

In terms of tissue distribution, in early gastrulae, expressed in the inner layer of the posterior dorsal ectoderm and in non-involuted mesoderm. By the mid-gastrula stage, expressed solely in the posterior ectoderm. At the end of gastrulation, expressed in ectodermal regions fated to become diencephalon, midbrain and hindbrain, and weakly expressed in regions fated to become spinal cord and tailbud. At the neurula stage, expressed in the midbrain and posterior forebrain (diencephalon) but not in the more anterior forebrain (telencephalon). Also expressed posteriorly in rhombomere 5. At tailbud stages, expression remains in the anterior brain and is also detectable along the length of the central nervous system and in the tailbud.

The protein resides in the nucleus. Probable transcription factor. May be involved in the early anteroposterior patterning of the neuroectoderm. This chain is Forkhead box protein B1, found in Xenopus laevis (African clawed frog).